The following is a 182-amino-acid chain: Large ribosomal subunit protein uL10 (182 aa).

The protein belongs to the universal ribosomal protein uL10 family. In terms of assembly, part of the ribosomal stalk of the 50S ribosomal subunit. The N-terminus interacts with L11 and the large rRNA to form the base of the stalk. The C-terminus forms an elongated spine to which L12 dimers bind in a sequential fashion forming a multimeric L10(L12)X complex.

Forms part of the ribosomal stalk, playing a central role in the interaction of the ribosome with GTP-bound translation factors. This chain is Large ribosomal subunit protein uL10, found in Gluconacetobacter diazotrophicus (strain ATCC 49037 / DSM 5601 / CCUG 37298 / CIP 103539 / LMG 7603 / PAl5).